Consider the following 767-residue polypeptide: Cap-specific mRNA (nucleoside-2'-O-)-methyltransferase 2 (767 aa).

An Adrift-type SAM-dependent 2'-O-MTase domain is found at 109–322 (ELCTQAWCKF…VYVVCLRYKG (214 aa)). Lysine 117 is an active-site residue. S-adenosyl-L-methionine contacts are provided by glycine 148, tryptophan 167, and aspartate 235. Aspartate 235 is an active-site residue. Residue lysine 275 is the Proton acceptor of the active site.

Its subcellular location is the nucleus. It is found in the cytoplasm. It carries out the reaction a 5'-end (N(7)-methyl 5'-triphosphoguanosine)-(2'-O-methyl-ribonucleoside)-(ribonucleotide) in mRNA + S-adenosyl-L-methionine = a 5'-end (N(7)-methyl 5'-triphosphoguanosine)-(2'-O-methyl-ribonucleoside)-(2'-O-methyl-ribonucleotide) in mRNA + S-adenosyl-L-homocysteine + H(+). Functionally, S-adenosyl-L-methionine-dependent methyltransferase that mediates mRNA cap2 2'-O-ribose methylation to the 5'-cap structure of mRNAs. Methylates the ribose of the second nucleotide of a m(7)GpppG-capped mRNA and small nuclear RNA (snRNA) (cap0) to produce m(7)GpppRmpNm (cap2). Recognizes a guanosine cap on RNA independently of its N(7) methylation status. Display cap2 methylation on both cap0 and cap1. Displays a preference for cap1 RNAs. This Mus musculus (Mouse) protein is Cap-specific mRNA (nucleoside-2'-O-)-methyltransferase 2 (Cmtr2).